The sequence spans 61 residues: Large ribosomal subunit protein eL37 (61 aa).

Zn(2+) is bound by residues Cys-19, Cys-22, Cys-34, and Cys-37. The segment at 19–37 (CRRCGRNAYNVSKHYCAAC) adopts a C4-type zinc-finger fold.

Belongs to the eukaryotic ribosomal protein eL37 family. Requires Zn(2+) as cofactor.

Functionally, binds to the 23S rRNA. This Saccharolobus islandicus (strain L.S.2.15 / Lassen #1) (Sulfolobus islandicus) protein is Large ribosomal subunit protein eL37.